A 329-amino-acid polypeptide reads, in one-letter code: GTP 3',8-cyclase (329 aa).

One can recognise a Radical SAM core domain in the interval Ala8 to Ala234. Arg17 contacts GTP. [4Fe-4S] cluster contacts are provided by Cys24 and Cys28. Tyr30 contributes to the S-adenosyl-L-methionine binding site. Cys31 is a [4Fe-4S] cluster binding site. Arg68 serves as a coordination point for GTP. An S-adenosyl-L-methionine-binding site is contributed by Gly72. Thr99 is a binding site for GTP. Ser123 contributes to the S-adenosyl-L-methionine binding site. Position 160 (Lys160) interacts with GTP. An S-adenosyl-L-methionine-binding site is contributed by Met194. Positions 257 and 260 each coordinate [4Fe-4S] cluster. Arg262 to Arg264 serves as a coordination point for GTP. [4Fe-4S] cluster is bound at residue Cys274.

Belongs to the radical SAM superfamily. MoaA family. In terms of assembly, monomer and homodimer. [4Fe-4S] cluster is required as a cofactor.

The enzyme catalyses GTP + AH2 + S-adenosyl-L-methionine = (8S)-3',8-cyclo-7,8-dihydroguanosine 5'-triphosphate + 5'-deoxyadenosine + L-methionine + A + H(+). It participates in cofactor biosynthesis; molybdopterin biosynthesis. In terms of biological role, catalyzes the cyclization of GTP to (8S)-3',8-cyclo-7,8-dihydroguanosine 5'-triphosphate. The chain is GTP 3',8-cyclase from Salmonella newport (strain SL254).